The chain runs to 225 residues: Urease subunit alpha (225 aa).

The interval 1-102 (MRLTPKELDK…LVTIHNPIED (102 aa)) is urease gamma. Residues 103 to 225 (NGKLTPGEYI…ANAAQKHFIH (123 aa)) form a urease beta region.

In the N-terminal section; belongs to the urease gamma subunit family. This sequence in the C-terminal section; belongs to the urease beta subunit family. As to quaternary structure, heterohexamer of 3 UreA (alpha) and 3 UreB (beta) subunits.

It is found in the cytoplasm. It carries out the reaction urea + 2 H2O + H(+) = hydrogencarbonate + 2 NH4(+). Its pathway is nitrogen metabolism; urea degradation; CO(2) and NH(3) from urea (urease route): step 1/1. This chain is Urease subunit alpha, found in Helicobacter hepaticus (strain ATCC 51449 / 3B1).